The primary structure comprises 455 residues: Differentiation-associated protein 1 (455 aa).

Residues 1-21 (MKFKLFLLVFFVFLLPYLSQS) form the signal peptide. A disordered region spans residues 349 to 434 (IGSSSSSSSS…SDDDLGNPSS (86 aa)). Low complexity predominate over residues 351–423 (SSSSSSSSSS…KSNHTSSESS (73 aa)). S433 is lipidated: GPI-like-anchor amidated serine. The propeptide at 434-455 (SSSILSVSKLIILLISIILYCF) is removed in mature form.

The protein localises to the cell membrane. Plays a role in differentiation. This chain is Differentiation-associated protein 1 (dia1), found in Dictyostelium discoideum (Social amoeba).